A 187-amino-acid chain; its full sequence is Frequenin-1 (187 aa).

A lipid anchor (N-myristoyl glycine) is attached at glycine 2. 4 consecutive EF-hand domains span residues 24-59 (EKEIRQWHKGFLKDCPNGLLTEQGFIKIYKQFFPQG), 60-95 (DPSKFASLVFRVFDENNDGSIEFEEFIRALSVTSKG), 96-131 (NLDEKLQWAFRLYDVDNDGYITREEMYNIVDAIYQM), and 143-178 (TPQKRVDKIFDQMDKNHDGKLTLEEFREGSKADPRI). Residues aspartate 73, asparagine 75, aspartate 77, serine 79, glutamate 84, aspartate 109, aspartate 111, aspartate 113, tyrosine 115, glutamate 120, aspartate 156, asparagine 158, aspartate 160, lysine 162, and glutamate 167 each coordinate Ca(2+).

The protein belongs to the recoverin family. As to quaternary structure, in contrast to Frq2, does not interact with ric8a. In terms of tissue distribution, enriched in synapses, such as the motor nerve endings at neuromuscular junctions. In the embryo, highly expressed in the ventral ganglia.

The protein resides in the cytoplasm. Ca(2+)-dependent modulation of synaptic efficacy. Also plays a role in axon terminal morphology. The polypeptide is Frequenin-1 (Frq1) (Drosophila melanogaster (Fruit fly)).